A 791-amino-acid chain; its full sequence is Vezatin (791 aa).

2 helical membrane passes run 138–158 (IATP…ALAA) and 163–183 (SISS…FTVL). The stretch at 435 to 464 (VRSLQLHLKALLNEVIILEDELEKLSSCKE) forms a coiled coil. Positions 752–769 (GDEWDDDDDDNDNDDDNY) are enriched in acidic residues. The tract at residues 752–791 (GDEWDDDDDDNDNDDDNYDQVKNVESHEKERNNVSLQLEE) is disordered. The segment covering 773–783 (KNVESHEKERN) has biased composition (basic and acidic residues).

It belongs to the vezatin family. In terms of assembly, interacts with myosin VIIa and the cadherin-catenins complex.

Its subcellular location is the cell membrane. It is found in the cell junction. The protein resides in the adherens junction. It localises to the nucleus. In terms of biological role, plays a pivotal role in the establishment of adherens junctions and their maintenance in adult life. This is Vezatin (vezt) from Xenopus tropicalis (Western clawed frog).